The primary structure comprises 303 residues: Recombination-associated protein RdgC (303 aa).

Belongs to the RdgC family.

The protein localises to the cytoplasm. It localises to the nucleoid. In terms of biological role, may be involved in recombination. In Yersinia pseudotuberculosis serotype O:1b (strain IP 31758), this protein is Recombination-associated protein RdgC.